Consider the following 448-residue polypeptide: MQGTKNNIYTVSRLNGEVRQILEGQLGKIWLNGEISNFSSPSSGHWYLTLKDHSSQIRCAMFKGRNQTVSFKPINGQQVLVKGAISVYEPRGDYQLLIESMLPAGDGLLAQQFDALKMKLAAEGLFAADTKRRLPKNIQRIGVITSPTGAAIRDVLHVLARRDPSIEVIIYPTQVQGETAAQSICQAINIANQRLEVDVLLLTRGGGSLEDLWCFNSEALAHTIYNSALPVVSAVGHEVDTTISDYVADIRAPTPSAGAELLSQDSDNKAQKLATALSRLQQSAKHYQLKQERRLSLLEHRLQRQDPKRTLQQFEQRFDEMQLRLESALSNRLHILSRRQQLLASRLEQQSPKHKLAIEGNRLSYLASRLQDALQDKLSQSEQRIKYVAHQLETVSPLATLSRGYSITTDIHNQVVDSTDKLTIGDSLQTRLRHGQVISTVTQIKPLE.

This sequence belongs to the XseA family. In terms of assembly, heterooligomer composed of large and small subunits.

Its subcellular location is the cytoplasm. It catalyses the reaction Exonucleolytic cleavage in either 5'- to 3'- or 3'- to 5'-direction to yield nucleoside 5'-phosphates.. Its function is as follows. Bidirectionally degrades single-stranded DNA into large acid-insoluble oligonucleotides, which are then degraded further into small acid-soluble oligonucleotides. This Shewanella baltica (strain OS223) protein is Exodeoxyribonuclease 7 large subunit.